A 282-amino-acid chain; its full sequence is 1-deoxy-11-beta-hydroxypentalenate dehydrogenase (282 aa).

NAD(+) is bound at residue Gly12 to Asp36. Residue Ser144 participates in substrate binding. Residue Tyr157 is the Proton acceptor of the active site. Lys161 is an NAD(+) binding site. The disordered stretch occupies residues Pro258–His282. Over residues Trp267–His282 the composition is skewed to low complexity.

The protein belongs to the short-chain dehydrogenases/reductases (SDR) family.

The enzyme catalyses 1-deoxy-11beta-hydroxypentalenate + NAD(+) = 1-deoxy-11-oxopentalenate + NADH + H(+). Its pathway is antibiotic biosynthesis; pentalenolactone biosynthesis. Functionally, catalyzes the oxidation of 1-deoxy-11-beta-hydroxypentalenic acid to 1-deoxy-11-oxopentalenic acid in the biosynthesis of pentalenolactone antibiotic. The polypeptide is 1-deoxy-11-beta-hydroxypentalenate dehydrogenase (pntF) (Streptomyces arenae).